The chain runs to 949 residues: Multimerin-2 (949 aa).

Positions 1-22 (MILSLLFSLGGPLGWGLLGAWA) are cleaved as a signal peptide. The EMI domain maps to 54–132 (GRNWCPYPMS…PGYTGPNCEH (79 aa)). 3 disulfide bridges follow: Cys58–Cys122, Cys85–Cys92, and Cys121–Cys130. An O-linked (Fuc...) serine glycan is attached at Ser63. O-linked (Fuc) threonine glycosylation occurs at Thr67. Residue Thr115 is glycosylated (O-linked (Fuc) threonine). The disordered stretch occupies residues 133-157 (HDSMAIPEPADPGDSHQEPQDGPVS). Residues 167–187 (INEVEVQQEQQEHLLGDLQND) adopt a coiled-coil conformation. N-linked (GlcNAc...) asparagine glycans are attached at residues Asn205, Asn214, Asn249, Asn261, Asn350, Asn379, Asn439, and Asn472. 3 coiled-coil regions span residues 292-487 (KFEA…DLIK), 547-596 (VDAH…HSAF), and 688-711 (EAATTALAGLARELQSLSNDVKNV). Asn727 and Asn765 each carry an N-linked (GlcNAc...) asparagine glycan. The interval 779–801 (RKGKKQQKDLEAPRKRDKKEAEP) is disordered. Positions 784 to 800 (QQKDLEAPRKRDKKEAE) are enriched in basic and acidic residues. The 129-residue stretch at 821-949 (EAGSPVAFYA…AFGGFLMFKT (129 aa)) folds into the C1q domain. An N-linked (GlcNAc...) asparagine glycan is attached at Asn845.

Heteromer of p110, p125, p140 and p200 subunits; disulfide-linked. Interacts with VEGFA. Interacts with CD93; this interaction promotes angiogenesis. Interacts with CD248. In terms of processing, N- and O-glycosylated. O-fucosylated within the EMI domain (at Ser-63, Thr-67 and Thr-115) by FUT10/POFUT3 and FUT11/POFUT4. Post-translationally, processed by matrix metalloproteinases (MMPs) including MMP9 and, to a lesser degree, by MMP2 upon angiogenic stimulation. As to expression, endothelium.

Its subcellular location is the secreted. The protein resides in the extracellular space. The protein localises to the extracellular matrix. Functionally, extracellular matrix protein that plays significant roles in the vascular system and is required for the maintenance and stability of blood vessel. Affects several essential steps in angiogenesis including endothelial cell proliferation, migration, and tube formation. Positively regulates angiogenesis by acting as a ligand for CD93 receptor. This chain is Multimerin-2 (MMRN2), found in Homo sapiens (Human).